The chain runs to 374 residues: Translocating chain-associated membrane protein 1 (374 aa).

The Cytoplasmic portion of the chain corresponds to 1-29 (MAIRKKSNKNPPLLSHEFLLQNHADIVSC). Residues 30–50 (LAMLFLLGLMFEVTAKGAIIF) traverse the membrane as a helical segment. Over 51–76 (VALQYNVTRPATEEQATESASLYHYG) the chain is Lumenal. The N-linked (GlcNAc...) asparagine glycan is linked to Asn56. The helical transmembrane segment at 77-97 (IKDLATVLFYMLVAIIIHAII) threads the bilayer. Residues 98 to 121 (QEYVLDKINRRMHFSKTKHSKFNE) lie on the Cytoplasmic side of the membrane. The TLC domain maps to 117 to 326 (SKFNESGQLS…NFQLRRWREH (210 aa)). The helical transmembrane segment at 122–142 (SGQLSAFYLFACVWGTFILIS) threads the bilayer. Residues 143–159 (ENYISDPTILWRAYPHN) are Lumenal-facing. Residues 160 to 180 (LMTFQTKFFYISQLAYWLHAF) traverse the membrane as a helical segment. Residues 181 to 192 (PELYFQKTKKED) lie on the Cytoplasmic side of the membrane. The chain crosses the membrane as a helical span at residues 193 to 213 (IPRQLVYIGLYLFHIAGAYLL). Residues 214–217 (NLNH) are Lumenal-facing. The helical transmembrane segment at 218 to 238 (LGLVLLVLHYFVEFLFHISRL) threads the bilayer. The Cytoplasmic portion of the chain corresponds to 239–251 (FYFSDEKYQKGFS). The helical transmembrane segment at 252–272 (LWAVLFVLGRLLTLILSVLTV) threads the bilayer. Residues 273-297 (GFGLARAENQKLDFSTGNFNVLAVR) are Lumenal-facing. The chain crosses the membrane as a helical span at residues 298-318 (IAVLASICITQAFMMWKFINF). Residues 319 to 374 (QLRRWREHSAFQAPPVKRKPAVTKGRSSRKGTENGVNGTVTSNGADSPRNRKEKSS) lie on the Cytoplasmic side of the membrane. A disordered region spans residues 333 to 374 (PVKRKPAVTKGRSSRKGTENGVNGTVTSNGADSPRNRKEKSS). Positions 334 to 347 (VKRKPAVTKGRSSR) are enriched in basic residues. Over residues 352–363 (NGVNGTVTSNGA) the composition is skewed to polar residues. Ser365 is modified (phosphoserine).

The protein belongs to the TRAM family. As to quaternary structure, interacts with SEC61B. May interact with Derlin-1/DERL1. In terms of processing, N-glycosylated.

It is found in the endoplasmic reticulum membrane. Involved in the translocation of nascent protein chains into or through the endoplasmic reticulum (ER) membrane by facilitating the proper chain positioning at the SEC61 channel. Regulates the exposure of nascent secretory protein chain to the cytosol during translocation into the ER. May affect the phospholipid bilayer in the vicinity of the lateral gate of the SEC61 channel, thereby facilitating ER protein transport. Intimately associates with transmembrane (TM) domain of nascent membrane proteins during the entire integration process into the ER membrane. Associates with the second TM domain of G-protein-coupled receptor opsin/OPSD nascent chain in the ER membrane, which may facilitate its integration into the membrane. Under conditions of ER stress, participates in the disposal of misfolded ER membrane proteins during the unfolded protein response (UPR), an integrated stress response (ISR) pathway, by selectively retrotranslocating misfolded ER-membrane proteins from the ER into the cytosol where they are ubiquitinated and degraded by the proteasome. The polypeptide is Translocating chain-associated membrane protein 1 (Mus musculus (Mouse)).